Reading from the N-terminus, the 394-residue chain is MSALRSVAGLLQRWLLPARPAGLYDRQLVVLALALMAVGLVIVASASIPEGIAINNDPFMFVKRHGLFLVMALGISWFVLQVPMARWQHYNGPMLVLAILMLVLVLLVGRSVNGSIRWLPLGPFNLQPAEFGKLALFVYLAGYLVRRQSEVRERFIGFMKPMAVLFVVAILLLAQPDLGSVVVMFVTSLGMLFLAGARLGQFIGLILVGVSAVVTLVIAEPYRMRRVTSFLDPWADPFGSGYQLTQSLMAFGRGSWFGEGLGNSIQKMEYLPEAHTDFVFAILGEELGYAGVLGALFLIFALSFKALKLGHQALVAERLYEGYLAIGIGIWFSFQTFVNVGAASGMMPTKGLTLPLVSYGGSSLIIMMVAVSMLVRIDFELRQASAQARVREVS.

The Cytoplasmic portion of the chain corresponds to 1–27 (MSALRSVAGLLQRWLLPARPAGLYDRQ). The chain crosses the membrane as a helical span at residues 28 to 48 (LVVLALALMAVGLVIVASASI). The Periplasmic segment spans residues 49–64 (PEGIAINNDPFMFVKR). A helical transmembrane segment spans residues 65-85 (HGLFLVMALGISWFVLQVPMA). The Cytoplasmic segment spans residues 86 to 88 (RWQ). Residues 89–109 (HYNGPMLVLAILMLVLVLLVG) form a helical membrane-spanning segment. Over 110 to 123 (RSVNGSIRWLPLGP) the chain is Periplasmic. The helical transmembrane segment at 124 to 144 (FNLQPAEFGKLALFVYLAGYL) threads the bilayer. Topologically, residues 145–154 (VRRQSEVRER) are cytoplasmic. The helical transmembrane segment at 155–175 (FIGFMKPMAVLFVVAILLLAQ) threads the bilayer. Residue P176 is a topological domain, periplasmic. The chain crosses the membrane as a helical span at residues 177–197 (DLGSVVVMFVTSLGMLFLAGA). A topological domain (cytoplasmic) is located at residue R198. Residues 199 to 219 (LGQFIGLILVGVSAVVTLVIA) form a helical membrane-spanning segment. The Periplasmic segment spans residues 220 to 279 (EPYRMRRVTSFLDPWADPFGSGYQLTQSLMAFGRGSWFGEGLGNSIQKMEYLPEAHTDFV). Residues 280-300 (FAILGEELGYAGVLGALFLIF) form a helical membrane-spanning segment. Residues 301 to 322 (ALSFKALKLGHQALVAERLYEG) lie on the Cytoplasmic side of the membrane. A helical transmembrane segment spans residues 323 to 343 (YLAIGIGIWFSFQTFVNVGAA). Over 344 to 354 (SGMMPTKGLTL) the chain is Periplasmic. The helical transmembrane segment at 355 to 375 (PLVSYGGSSLIIMMVAVSMLV) threads the bilayer. Topologically, residues 376-394 (RIDFELRQASAQARVREVS) are cytoplasmic.

The protein belongs to the SEDS family. FtsW subfamily.

The protein resides in the cell inner membrane. The enzyme catalyses [GlcNAc-(1-&gt;4)-Mur2Ac(oyl-L-Ala-gamma-D-Glu-L-Lys-D-Ala-D-Ala)](n)-di-trans,octa-cis-undecaprenyl diphosphate + beta-D-GlcNAc-(1-&gt;4)-Mur2Ac(oyl-L-Ala-gamma-D-Glu-L-Lys-D-Ala-D-Ala)-di-trans,octa-cis-undecaprenyl diphosphate = [GlcNAc-(1-&gt;4)-Mur2Ac(oyl-L-Ala-gamma-D-Glu-L-Lys-D-Ala-D-Ala)](n+1)-di-trans,octa-cis-undecaprenyl diphosphate + di-trans,octa-cis-undecaprenyl diphosphate + H(+). It functions in the pathway cell wall biogenesis; peptidoglycan biosynthesis. Its function is as follows. Peptidoglycan polymerase that is essential for cell division. The protein is Probable peptidoglycan glycosyltransferase FtsW of Aeromonas salmonicida (strain A449).